A 95-amino-acid chain; its full sequence is Citrate lyase acyl carrier protein (95 aa).

Serine 14 carries the post-translational modification O-(phosphoribosyl dephospho-coenzyme A)serine.

Belongs to the CitD family. In terms of assembly, oligomer with a subunit composition of (alpha,beta,gamma)6.

It is found in the cytoplasm. Its function is as follows. Covalent carrier of the coenzyme of citrate lyase. The chain is Citrate lyase acyl carrier protein from Haemophilus influenzae (strain PittEE).